A 288-amino-acid chain; its full sequence is Probable ketoamine kinase PM0587 (288 aa).

92–94 is a binding site for ATP; sequence EAL.

It belongs to the fructosamine kinase family.

Functionally, ketoamine kinase that phosphorylates ketoamines on the third carbon of the sugar moiety to generate ketoamine 3-phosphate. This Pasteurella multocida (strain Pm70) protein is Probable ketoamine kinase PM0587.